We begin with the raw amino-acid sequence, 890 residues long: Probable LRR receptor-like serine/threonine-protein kinase At1g51860 (890 aa).

An N-terminal signal peptide occupies residues 1–23 (MKSLHWFLHLLIIAFTVLRSVEA). The Extracellular segment spans residues 24–513 (QNQAGFISLD…KESKKVPMVA (490 aa)). Residues asparagine 49, asparagine 96, asparagine 142, asparagine 181, asparagine 256, asparagine 285, asparagine 289, asparagine 295, asparagine 312, asparagine 332, asparagine 340, asparagine 402, and asparagine 419 are each glycosylated (N-linked (GlcNAc...) asparagine). 3 LRR repeats span residues 412 to 435 (RIIS…SKLT), 436 to 458 (LLTV…FAEM), and 460 to 481 (SLKL…PDSL). Asparagine 465, asparagine 473, and asparagine 497 each carry an N-linked (GlcNAc...) asparagine glycan. A helical membrane pass occupies residues 514–534 (IAASVAGVFALLVILAIFFVI). The Cytoplasmic portion of the chain corresponds to 535 to 890 (KRKNVKAHKS…STSDFAPGAR (356 aa)). A Phosphothreonine modification is found at threonine 575. The Protein kinase domain occupies 584–856 (NNFERVLGKG…HVVMELNDCV (273 aa)). Residues 590–598 (LGKGGFGTV) and lysine 611 contribute to the ATP site. Residue tyrosine 656 is modified to Phosphotyrosine. Aspartate 708 serves as the catalytic Proton acceptor. A Phosphoserine modification is found at serine 742. 2 positions are modified to phosphothreonine: threonine 743 and threonine 748. Tyrosine 756 carries the phosphotyrosine modification.

This sequence belongs to the protein kinase superfamily. Ser/Thr protein kinase family.

The protein resides in the membrane. It carries out the reaction L-seryl-[protein] + ATP = O-phospho-L-seryl-[protein] + ADP + H(+). The catalysed reaction is L-threonyl-[protein] + ATP = O-phospho-L-threonyl-[protein] + ADP + H(+). This is Probable LRR receptor-like serine/threonine-protein kinase At1g51860 from Arabidopsis thaliana (Mouse-ear cress).